Here is a 274-residue protein sequence, read N- to C-terminus: 2,3,4,5-tetrahydropyridine-2,6-dicarboxylate N-succinyltransferase (274 aa).

The substrate site is built by R105 and D142.

It belongs to the transferase hexapeptide repeat family. In terms of assembly, homotrimer.

It localises to the cytoplasm. It catalyses the reaction (S)-2,3,4,5-tetrahydrodipicolinate + succinyl-CoA + H2O = (S)-2-succinylamino-6-oxoheptanedioate + CoA. The protein operates within amino-acid biosynthesis; L-lysine biosynthesis via DAP pathway; LL-2,6-diaminopimelate from (S)-tetrahydrodipicolinate (succinylase route): step 1/3. This Thiobacillus denitrificans (strain ATCC 25259 / T1) protein is 2,3,4,5-tetrahydropyridine-2,6-dicarboxylate N-succinyltransferase.